The sequence spans 344 residues: Heat-inducible transcription repressor HrcA (344 aa).

Belongs to the HrcA family.

Negative regulator of class I heat shock genes (grpE-dnaK-dnaJ and groELS operons). Prevents heat-shock induction of these operons. The sequence is that of Heat-inducible transcription repressor HrcA from Streptococcus pyogenes serotype M6 (strain ATCC BAA-946 / MGAS10394).